The chain runs to 293 residues: Probable E3 ubiquitin-protein ligase RNF144A-A (293 aa).

The TRIAD supradomain stretch occupies residues 16–237 (PLVSCKLCLG…YDKGPCRNKL (222 aa)). 14 residues coordinate Zn(2+): Cys-20, Cys-23, Cys-43, Cys-46, Cys-111, Cys-116, Cys-135, Cys-138, Cys-143, Cys-146, His-151, Cys-156, Cys-186, and Cys-189. An RING-type 1 zinc finger spans residues 20–70 (CKLCLGEFPLEQMTTITQCQCVFCTMCLKQYVELLIKEGFETAISCPDSAC). Residues 91 to 156 (QRYRKLQFEK…KASWHPDQDC (66 aa)) form an IBR-type zinc finger. The RING-type 2; atypical zinc finger occupies 186 to 215 (CPKCKVYIERDEGCAQMMCKNCKHAFCWYC). The active site involves Cys-199. Residues Cys-204, Cys-207, Cys-212, Cys-215, His-227, and Cys-233 each coordinate Zn(2+). Residues 251-271 (VVGIFAGFGLLLLVASPFLLL) traverse the membrane as a helical segment.

Belongs to the RBR family. RNF144 subfamily.

It localises to the membrane. It carries out the reaction [E2 ubiquitin-conjugating enzyme]-S-ubiquitinyl-L-cysteine + [acceptor protein]-L-lysine = [E2 ubiquitin-conjugating enzyme]-L-cysteine + [acceptor protein]-N(6)-ubiquitinyl-L-lysine.. It participates in protein modification; protein ubiquitination. E3 ubiquitin-protein ligase which accepts ubiquitin from E2 ubiquitin-conjugating enzymes ube2l3 and ube2l6 in the form of a thioester and then directly transfers the ubiquitin to targeted substrates. This Danio rerio (Zebrafish) protein is Probable E3 ubiquitin-protein ligase RNF144A-A (rnf144aa).